The primary structure comprises 439 residues: Fibulin-7 (439 aa).

The signal sequence occupies residues 1-24; the sequence is MVPSSPRALFLLLLILACPEPRAS. A coiled-coil region spans residues 28-53; that stretch reads LSKQQLLSAIRQLQQLLKGQETRFAE. The Sushi domain maps to 79–136; sequence VSCPALNTPADGRKFGSKYLVDHEVHFTCNPGFRLVGPSSVVCLPNGTWTGEQPHCRG. Cystine bridges form between cysteine 81/cysteine 121, cysteine 107/cysteine 134, cysteine 140/cysteine 151, cysteine 145/cysteine 160, cysteine 162/cysteine 171, cysteine 228/cysteine 244, cysteine 240/cysteine 253, cysteine 255/cysteine 268, cysteine 274/cysteine 287, cysteine 281/cysteine 296, and cysteine 301/cysteine 318. A glycan (N-linked (GlcNAc...) asparagine) is linked at asparagine 124. Residues 136 to 172 enclose the EGF-like 1; calcium-binding domain; it reads GISECSSQPCQNGGTCVEGVNQYRCICPPGRTGNRCQ. An EGF-like 2; calcium-binding domain is found at 224–269; that stretch reads DVNECELYGQEGRPRLCMHACVNTPGSYRCTCPGGYRTLADGKSCE. The EGF-like 3; calcium-binding domain occupies 270–319; sequence DVDECVGLQPVCPQGTTCINTGGSFQCVSPECPEGSGNVSYVKTSPFQCE. Asparagine 307 is a glycosylation site (N-linked (GlcNAc...) asparagine).

This sequence belongs to the fibulin family. As to quaternary structure, interacts with heparin, FBLN1, FN1 and DSPP. Preferentially binds dental mesenchyme cells and odontoblasts but not dental epithelial cells or nondental cells. Binding requires a heparan sulfate-containing receptor on the cell surface as well as an integrin. N-glycosylated.

The protein resides in the secreted. Its subcellular location is the extracellular space. The protein localises to the extracellular matrix. Its function is as follows. An adhesion molecule that interacts with extracellular matrix molecules in developing teeth and may play important roles in differentiation and maintenance of odontoblasts as well as in dentin formation. In Homo sapiens (Human), this protein is Fibulin-7 (FBLN7).